A 766-amino-acid chain; its full sequence is Dolichyl pyrophosphate Glc1Man9GlcNAc2 alpha-1,3-glucosyltransferase (766 aa).

Transmembrane regions (helical) follow at residues L6–V26, Y60–F80, I96–A116, S156–I176, I190–L210, A228–H248, P324–I344, A350–V370, I395–F415, I423–L443, V452–L472, and L482–W502.

Belongs to the ALG6/ALG8 glucosyltransferase family.

The protein localises to the endoplasmic reticulum membrane. The catalysed reaction is an alpha-D-Glc-(1-&gt;3)-alpha-D-Man-(1-&gt;2)-alpha-D-Man-(1-&gt;2)-alpha-D-Man-(1-&gt;3)-[alpha-D-Man-(1-&gt;2)-alpha-D-Man-(1-&gt;3)-[alpha-D-Man-(1-&gt;2)-alpha-D-Man-(1-&gt;6)]-alpha-D-Man-(1-&gt;6)]-beta-D-Man-(1-&gt;4)-beta-D-GlcNAc-(1-&gt;4)-alpha-D-GlcNAc-diphospho-di-trans,poly-cis-dolichol + a di-trans,poly-cis-dolichyl beta-D-glucosyl phosphate = an alpha-D-Glc-(1-&gt;3)-alpha-D-Glc-(1-&gt;3)-alpha-D-Man-(1-&gt;2)-alpha-D-Man-(1-&gt;2)-alpha-D-Man-(1-&gt;3)-[alpha-D-Man-(1-&gt;2)-alpha-D-Man-(1-&gt;3)-[alpha-D-Man-(1-&gt;2)-alpha-D-Man-(1-&gt;6)]-alpha-D-Man-(1-&gt;6)]-beta-D-Man-(1-&gt;4)-beta-D-GlcNAc-(1-&gt;4)-alpha-D-GlcNAc-diphospho-di-trans,poly-cis-dolichol + a di-trans,poly-cis-dolichyl phosphate + H(+). It participates in protein modification; protein glycosylation. In terms of biological role, dolichyl pyrophosphate Glc1Man9GlcNAc2 alpha-1,3-glucosyltransferase that operates in the biosynthetic pathway of dolichol-linked oligosaccharides, the glycan precursors employed in protein asparagine (N)-glycosylation. The assembly of dolichol-linked oligosaccharides begins on the cytosolic side of the endoplasmic reticulum membrane and finishes in its lumen. The sequential addition of sugars to dolichol pyrophosphate produces dolichol-linked oligosaccharides containing fourteen sugars, including two GlcNAcs, nine mannoses and three glucoses. Once assembled, the oligosaccharide is transferred from the lipid to nascent proteins by oligosaccharyltransferases. In the lumen of the endoplasmic reticulum, adds the second glucose residue from dolichyl phosphate glucose (Dol-P-Glc) onto the lipid-linked oligosaccharide intermediate Glc(1)Man(9)GlcNAc(2)-PP-Dol to produce Glc(2)Man(9)GlcNAc(2)-PP-Dol. The sequence is that of Dolichyl pyrophosphate Glc1Man9GlcNAc2 alpha-1,3-glucosyltransferase from Caenorhabditis elegans.